Reading from the N-terminus, the 196-residue chain is Glycerol-3-phosphate acyltransferase 2 (196 aa).

The next 5 helical transmembrane spans lie at 2-22 (GWWLFPILGYFIGSIPFSYLI), 52-72 (VGGICLLLDALKGFFPVFITI), 80-100 (IVSLTAIATVLGHDFPIFMKF), 112-132 (IIFCLSWPTGLVFTLTWLVIV), and 137-156 (YASLGSLVALYVSALLGYLL).

This sequence belongs to the PlsY family. In terms of assembly, probably interacts with PlsX.

Its subcellular location is the cell inner membrane. It carries out the reaction an acyl phosphate + sn-glycerol 3-phosphate = a 1-acyl-sn-glycero-3-phosphate + phosphate. The protein operates within lipid metabolism; phospholipid metabolism. Its function is as follows. Catalyzes the transfer of an acyl group from acyl-phosphate (acyl-PO(4)) to glycerol-3-phosphate (G3P) to form lysophosphatidic acid (LPA). This enzyme utilizes acyl-phosphate as fatty acyl donor, but not acyl-CoA or acyl-ACP. The chain is Glycerol-3-phosphate acyltransferase 2 from Thermotoga maritima (strain ATCC 43589 / DSM 3109 / JCM 10099 / NBRC 100826 / MSB8).